Consider the following 706-residue polypeptide: G2/M phase-specific E3 ubiquitin-protein ligase (706 aa).

A C2HC pre-PHD-type zinc finger spans residues 11–51 (NLACVFCRKHDDCPNKYGEKKTKEKWNLTVHYYCLLMSSGI). Residues 79-128 (LKCCVCKKNGASIGCVAPRCKRSYHFPCGLQRECIFQFTGNFASFCWDHR) form a PHD-type 1 zinc finger. Residues 143 to 193 (PCTICLEFIEPIPSYNILRSPCCKNAWFHRDCLQVQAINAGVFFFRCTICN) form a PHD-type 2; degenerate zinc finger. The PHD-type 3 zinc-finger motif lies at 237-286 (RCRCKEGRDYNAPDSKWEIKRCQCCGSSGTHLACSSLRSWEQNWECLECR). The HECT domain occupies 371-698 (IWNSALDAFR…IRNTLRLEKE (328 aa)).

In terms of tissue distribution, predominantly expressed in brain, liver, kidney, testes and ovary.

The protein localises to the nucleus. It localises to the nucleolus. The protein resides in the cytoplasm. It catalyses the reaction S-ubiquitinyl-[E2 ubiquitin-conjugating enzyme]-L-cysteine + [acceptor protein]-L-lysine = [E2 ubiquitin-conjugating enzyme]-L-cysteine + N(6)-ubiquitinyl-[acceptor protein]-L-lysine.. Its pathway is protein modification; protein ubiquitination. Its function is as follows. E3 ubiquitin-protein ligase which accepts ubiquitin from an E2 ubiquitin-conjugating enzyme in the form of a thioester and then directly transfers the ubiquitin to targeted substrates. Essential in early embryonic development to prevent apoptotic death. This chain is G2/M phase-specific E3 ubiquitin-protein ligase (G2E3), found in Homo sapiens (Human).